The sequence spans 978 residues: MELGPPLVLLLATVWHGQGAPVIEPSGPELVVEPGETVTLRCVSNGSVEWDGPISPYWTLDPESPGSTLTTRNATFKNTGTYRCTELEDPMAGSTTIHLYVKDPAHSWNLLAQEVTVVEGQEAVLPCLITDPALKDSVSLMREGGRQVLRKTVYFFSAWRGFIIRKAKVLDSNTYVCKTMVNGRESTSTGIWLKVNRVHPEPPQIKLEPSKLVRIRGEAAQIVCSATNAEVGFNVILKRGDTKLEIPLNSDFQDNYYKKVRALSLNAVDFQDAGIYSCVASNDVGTRTATMNFQVVESAYLNLTSEQSLLQEVSVGDSLILTVHADAYPSIQHYNWTYLGPFFEDQRKLEFITQRAIYRYTFKLFLNRVKASEAGQYFLMAQNKAGWNNLTFELTLRYPPEVSVTWMPVNGSDVLFCDVSGYPQPSVTWMECRGHTDRCDEAQALQVWNDTHPEVLSQKPFDKVIIQSQLPIGTLKHNMTYFCKTHNSVGNSSQYFRAVSLGQSKQLPDESLFTPVVVACMSVMSLLVLLLLLLLYKYKQKPKYQVRWKIIERYEGNSYTFIDPTQLPYNEKWEFPRNNLQFGKTLGAGAFGKVVEATAFGLGKEDAVLKVAVKMLKSTAHADEKEALMSELKIMSHLGQHENIVNLLGACTHGGPVLVITEYCCYGDLLNFLRRKAEAMLGPSLSPGQDSEGDSSYKNIHLEKKYVRRDSGFSSQGVDTYVEMRPVSTSSSDSFFKQDLDKEPSRPLELWDLLHFSSQVAQGMAFLASKNCIHRDVAARNVLLTSGHVAKIGDFGLARDIMNDSNYVVKGNARLPVKWMAPESILYCVYTVQSDVWSYGILLWEIFSLGLNPYPGILVNNKFYKLVKDGYQMAQPVFAPKNIYSIMQSCWDLEPTRRPTFQQICFLLQEQARLERRDQDYANLPSSGGSSGSDSGGGSSGGSSSEPEEESSSEHLACCEPGDIAQPLLQPNNYQFAC.

The N-terminal stretch at 1-19 is a signal peptide; sequence MELGPPLVLLLATVWHGQG. Residues 20-515 are Extracellular-facing; that stretch reads APVIEPSGPE…QLPDESLFTP (496 aa). Ig-like C2-type domains follow at residues 24–104, 107–197, 204–298, 299–397, and 398–503; these read EPSG…VKDP, SWNL…KVNR, QIKL…VVES, AYLN…LTLR, and YPPE…SLGQ. Intrachain disulfides connect Cys42–Cys84, Cys127–Cys177, and Cys224–Cys278. N-linked (GlcNAc...) asparagine glycans are attached at residues Asn45 and Asn73. N-linked (GlcNAc...) asparagine glycans are attached at residues Asn302, Asn335, Asn389, Asn410, Asn449, Asn478, and Asn491. Cys417 and Cys483 are disulfide-bonded. A helical membrane pass occupies residues 516 to 536; sequence VVVACMSVMSLLVLLLLLLLY. The Cytoplasmic portion of the chain corresponds to 537-978; it reads KYKQKPKYQV…LQPNNYQFAC (442 aa). The tract at residues 540–572 is regulatory juxtamembrane domain; it reads QKPKYQVRWKIIERYEGNSYTFIDPTQLPYNEK. Tyr544 and Tyr559 each carry phosphotyrosine; by autocatalysis. The 335-residue stretch at 580–914 folds into the Protein kinase domain; sequence LQFGKTLGAG…CFLLQEQARL (335 aa). Residues 586–594 and Lys614 each bind ATP; that span reads LGAGAFGKV. Phosphotyrosine; by autocatalysis occurs at positions 697 and 706. Ser711 is modified (phosphoserine). Tyr721 bears the Phosphotyrosine; by autocatalysis mark. Asp776 serves as the catalytic Proton acceptor. Positions 794-816 are activation loop; sequence DFGLARDIMNDSNYVVKGNARLP. 2 positions are modified to phosphotyrosine; by autocatalysis: Tyr807 and Tyr921. The segment at 921-957 is disordered; the sequence is YANLPSSGGSSGSDSGGGSSGGSSSEPEEESSSEHLA. Positions 929-941 are enriched in gly residues; that stretch reads GSSGSDSGGGSSG. Residue Tyr974 is modified to Phosphotyrosine; by autocatalysis.

The protein belongs to the protein kinase superfamily. Tyr protein kinase family. CSF-1/PDGF receptor subfamily. As to quaternary structure, monomer. Homodimer. Interacts with CSF1 and IL34. Interaction with dimeric CSF1 or IL34 leads to receptor homodimerization. Interacts with INPPL1/SHIP2 and THOC5. Interacts (tyrosine phosphorylated) with PLCG2 (via SH2 domain). Interacts (tyrosine phosphorylated) with PIK3R1 (via SH2 domain). Interacts (tyrosine phosphorylated) with FYN, YES1 and SRC (via SH2 domain). Interacts (tyrosine phosphorylated) with CBL, GRB2 and SLA2. In terms of processing, autophosphorylated in response to CSF1 or IL34 binding. Phosphorylation at Tyr-559 is important for normal down-regulation of signaling by ubiquitination, internalization and degradation. Phosphorylation at Tyr-559 and Tyr-807 is important for interaction with SRC family members, including FYN, YES1 and SRC, and for subsequent activation of these protein kinases. Phosphorylation at Tyr-697 and Tyr-921 is important for interaction with GRB2. Phosphorylation at Tyr-721 is important for interaction with PIK3R1. Phosphorylation at Tyr-721 and Tyr-807 is important for interaction with PLCG2. Phosphorylation at Tyr-974 is important for interaction with CBL. Dephosphorylation by PTPN2 negatively regulates downstream signaling and macrophage differentiation. Post-translationally, ubiquitinated. Becomes rapidly polyubiquitinated after autophosphorylation, leading to its degradation.

The protein resides in the cell membrane. The catalysed reaction is L-tyrosyl-[protein] + ATP = O-phospho-L-tyrosyl-[protein] + ADP + H(+). Present in an inactive conformation in the absence of bound ligand. CSF1 or IL34 binding leads to dimerization and activation by autophosphorylation on tyrosine residues. Functionally, tyrosine-protein kinase that acts as a cell-surface receptor for CSF1 and IL34 and plays an essential role in the regulation of survival, proliferation and differentiation of hematopoietic precursor cells, especially mononuclear phagocytes, such as macrophages and monocytes. Promotes the release of pro-inflammatory chemokines in response to IL34 and CSF1, and thereby plays an important role in innate immunity and in inflammatory processes. Plays an important role in the regulation of osteoclast proliferation and differentiation, the regulation of bone resorption, and is required for normal bone and tooth development. Required for normal male and female fertility, and for normal development of milk ducts and acinar structures in the mammary gland during pregnancy. Promotes reorganization of the actin cytoskeleton, regulates formation of membrane ruffles, cell adhesion and cell migration, and promotes cancer cell invasion. Activates several signaling pathways in response to ligand binding, including the ERK1/2 and the JNK pathway. Phosphorylates PIK3R1, PLCG2, GRB2, SLA2 and CBL. Activation of PLCG2 leads to the production of the cellular signaling molecules diacylglycerol and inositol 1,4,5-trisphosphate, that then lead to the activation of protein kinase C family members, especially PRKCD. Phosphorylation of PIK3R1, the regulatory subunit of phosphatidylinositol 3-kinase, leads to activation of the AKT1 signaling pathway. Activated CSF1R also mediates activation of the MAP kinases MAPK1/ERK2 and/or MAPK3/ERK1, and of the SRC family kinases SRC, FYN and YES1. Activated CSF1R transmits signals both via proteins that directly interact with phosphorylated tyrosine residues in its intracellular domain, or via adapter proteins, such as GRB2. Promotes activation of STAT family members STAT3, STAT5A and/or STAT5B. Promotes tyrosine phosphorylation of SHC1 and INPP5D/SHIP-1. Receptor signaling is down-regulated by protein phosphatases, such as INPP5D/SHIP-1, that dephosphorylate the receptor and its downstream effectors, and by rapid internalization of the activated receptor. In the central nervous system, may play a role in the development of microglia macrophages. The protein is Macrophage colony-stimulating factor 1 receptor (Csf1r) of Rattus norvegicus (Rat).